Reading from the N-terminus, the 339-residue chain is Ketol-acid reductoisomerase (NADP(+)) (339 aa).

The 182-residue stretch at 1–182 (MRVYYDRDAD…GGGRSGIIET (182 aa)) folds into the KARI N-terminal Rossmann domain. Residues 24–27 (YGSQ), arginine 48, serine 51, serine 53, and 83–86 (DELQ) contribute to the NADP(+) site. The active site involves histidine 108. Glycine 134 serves as a coordination point for NADP(+). In terms of domain architecture, KARI C-terminal knotted spans 183-328 (TFREECETDL…EKLRAMMPWI (146 aa)). The Mg(2+) site is built by aspartate 191, glutamate 195, glutamate 227, and glutamate 231. Serine 252 lines the substrate pocket.

This sequence belongs to the ketol-acid reductoisomerase family. The cofactor is Mg(2+).

The enzyme catalyses (2R)-2,3-dihydroxy-3-methylbutanoate + NADP(+) = (2S)-2-acetolactate + NADPH + H(+). It catalyses the reaction (2R,3R)-2,3-dihydroxy-3-methylpentanoate + NADP(+) = (S)-2-ethyl-2-hydroxy-3-oxobutanoate + NADPH + H(+). The protein operates within amino-acid biosynthesis; L-isoleucine biosynthesis; L-isoleucine from 2-oxobutanoate: step 2/4. Its pathway is amino-acid biosynthesis; L-valine biosynthesis; L-valine from pyruvate: step 2/4. In terms of biological role, involved in the biosynthesis of branched-chain amino acids (BCAA). Catalyzes an alkyl-migration followed by a ketol-acid reduction of (S)-2-acetolactate (S2AL) to yield (R)-2,3-dihydroxy-isovalerate. In the isomerase reaction, S2AL is rearranged via a Mg-dependent methyl migration to produce 3-hydroxy-3-methyl-2-ketobutyrate (HMKB). In the reductase reaction, this 2-ketoacid undergoes a metal-dependent reduction by NADPH to yield (R)-2,3-dihydroxy-isovalerate. The chain is Ketol-acid reductoisomerase (NADP(+)) from Chelativorans sp. (strain BNC1).